We begin with the raw amino-acid sequence, 664 residues long: Two-component response regulator ARR2 (664 aa).

Residues 1 to 21 (MVNPGHGRGPDSGTAAGGSNS) form a disordered region. The Response regulatory domain maps to 29–144 (RVLVVDDDPT…ALKNIWQHVV (116 aa)). Asp-80 is modified (4-aspartylphosphate). Positions 151-215 (WNVSEHSGGS…DDKEDSSSLK (65 aa)) are disordered. Positions 165 to 178 (GGDRDRQQQHREDA) are enriched in basic and acidic residues. The segment covering 180–191 (NNSSSVNEGNGR) has biased composition (polar residues). A compositionally biased stretch (acidic residues) spans 200–209 (EVDDQGDDKE). Positions 215 to 218 (KKPR) match the Nuclear localization signal motif. A DNA-binding region (myb-like GARP) is located at residues 218–268 (RVVWSVELHQQFVAAVNQLGVDKAVPKKILEMMNVPGLTRENVASHLQKYR). Residues 554–567 (AAFSTSEAYSSSST) are compositionally biased toward low complexity. Positions 554 to 589 (AAFSTSEAYSSSSTQRKRRETDATVVGEHGQNLQSP) are disordered.

The protein belongs to the ARR family. Type-B subfamily. In terms of assembly, binds the target DNA as a monomer. Interacts with histidine-containing phosphotransfer proteins. Two-component system major event consists of a His-to-Asp phosphorelay between a sensor histidine kinase (HK) and a response regulator (RR). In plants, the His-to-Asp phosphorelay involves an additional intermediate named Histidine-containing phosphotransfer protein (HPt). This multistep phosphorelay consists of a His-Asp-His-Asp sequential transfer of a phosphate group between first a His and an Asp of the HK protein, followed by the transfer to a conserved His of the HPt protein and finally the transfer to an Asp in the receiver domain of the RR protein. Phosphorylated in response to cytokinin mediated by AHK3. As to expression, detected in the whole plant. Predominantly expressed in pollen.

The protein resides in the nucleus. Transcriptional activator that binds specifically to the DNA sequence 5'-[AG]GATT-3'. Functions as a response regulator involved in His-to-Asp phosphorelay signal transduction system. Phosphorylation of the Asp residue in the receiver domain activates the ability of the protein to promote the transcription of target genes. Could directly activate some type-A response regulators in response to cytokinins. Involved in the expression of nuclear genes for components of mitochondrial complex I. Promotes cytokinin-mediated leaf longevity. Involved in the ethylene signaling pathway in an ETR1-dependent manner and in the cytokinin signaling pathway. This is Two-component response regulator ARR2 (ARR2) from Arabidopsis thaliana (Mouse-ear cress).